Consider the following 98-residue polypeptide: uncharacterized protein (98 aa).

This is an uncharacterized protein from Schizosaccharomyces pombe (strain 972 / ATCC 24843) (Fission yeast).